The chain runs to 279 residues: Protein NipSnap homolog 1 (279 aa).

It belongs to the NipSnap family.

It localises to the mitochondrion matrix. In terms of biological role, protein involved in mitophagy. Accumulates on the mitochondria surface in response to mitochondrial depolarization and acts as a 'eat me' signal by recruiting proteins involved in selective autophagy. The polypeptide is Protein NipSnap homolog 1 (Danio rerio (Zebrafish)).